The primary structure comprises 133 residues: S-adenosylmethionine decarboxylase proenzyme (133 aa).

The Schiff-base intermediate with substrate; via pyruvic acid role is filled by Ser65. Ser65 carries the post-translational modification Pyruvic acid (Ser); by autocatalysis. Catalysis depends on His70, which acts as the Proton acceptor; for processing activity. Catalysis depends on Cys85, which acts as the Proton donor; for catalytic activity.

Belongs to the prokaryotic AdoMetDC family. Type 1 subfamily. In terms of assembly, heterotetramer of two alpha and two beta chains arranged as a dimer of alpha/beta heterodimers. Pyruvate serves as cofactor. In terms of processing, is synthesized initially as an inactive proenzyme. Formation of the active enzyme involves a self-maturation process in which the active site pyruvoyl group is generated from an internal serine residue via an autocatalytic post-translational modification. Two non-identical subunits are generated from the proenzyme in this reaction, and the pyruvate is formed at the N-terminus of the alpha chain, which is derived from the carboxyl end of the proenzyme. The post-translation cleavage follows an unusual pathway, termed non-hydrolytic serinolysis, in which the side chain hydroxyl group of the serine supplies its oxygen atom to form the C-terminus of the beta chain, while the remainder of the serine residue undergoes an oxidative deamination to produce ammonia and the pyruvoyl group blocking the N-terminus of the alpha chain.

The enzyme catalyses S-adenosyl-L-methionine + H(+) = S-adenosyl 3-(methylsulfanyl)propylamine + CO2. It functions in the pathway amine and polyamine biosynthesis; S-adenosylmethioninamine biosynthesis; S-adenosylmethioninamine from S-adenosyl-L-methionine: step 1/1. In terms of biological role, catalyzes the decarboxylation of S-adenosylmethionine to S-adenosylmethioninamine (dcAdoMet), the propylamine donor required for the synthesis of the polyamines spermine and spermidine from the diamine putrescine. This chain is S-adenosylmethionine decarboxylase proenzyme, found in Brevibacillus brevis (strain 47 / JCM 6285 / NBRC 100599).